The following is a 335-amino-acid chain: Proline racemase (335 aa).

Residue cysteine 91 is the Proton acceptor of the active site. Cysteine 255 functions as the Proton donor in the catalytic mechanism.

This sequence belongs to the proline racemase family. In terms of assembly, homodimer.

The enzyme catalyses L-proline = D-proline. In terms of biological role, catalyzes the reversible interconversion of L- and D-proline. Plays an important role in the regulation of intra- and extracellular amino acid pools, allowing the bacterium to profit from host precursors and enzymatic pathways. Strong B-cell mitogen. In Clostridioides difficile (strain 630) (Peptoclostridium difficile), this protein is Proline racemase.